Here is a 104-residue protein sequence, read N- to C-terminus: Acetylcholine receptor subunit alpha (104 aa).

The Extracellular segment spans residues 1 to 104; the sequence is NPPAIFKSYC…YFIVNVIIPC (104 aa). 2 disulfides stabilise this stretch: cysteine 10–cysteine 24 and cysteine 74–cysteine 75. The N-linked (GlcNAc...) asparagine glycan is linked to asparagine 23.

It belongs to the ligand-gated ion channel (TC 1.A.9) family. Acetylcholine receptor (TC 1.A.9.1) subfamily. Alpha-1/CHRNA1 sub-subfamily. One of the alpha chains that assemble within the acetylcholine receptor, a pentamer of two alpha chains, a beta, a delta, and a gamma or epsilon chains.

The protein resides in the postsynaptic cell membrane. It is found in the cell membrane. The catalysed reaction is K(+)(in) = K(+)(out). The enzyme catalyses Na(+)(in) = Na(+)(out). Its function is as follows. Upon acetylcholine binding, the AChR responds by an extensive change in conformation that affects all subunits and leads to opening of an ion-conducting channel across the plasma membrane. The polypeptide is Acetylcholine receptor subunit alpha (CHRNA1) (Naja naja (Indian cobra)).